The primary structure comprises 489 residues: Adenosylhomocysteinase (489 aa).

3 residues coordinate substrate: Thr-68, Asp-151, and Glu-213. 214-216 (TTT) contributes to the NAD(+) binding site. The substrate site is built by Lys-243 and Asp-247. NAD(+)-binding positions include Asn-248, 277 to 282 (GYGDVG), Glu-300, Asn-335, 356 to 358 (IGH), and Asn-403.

Belongs to the adenosylhomocysteinase family. NAD(+) serves as cofactor.

The protein localises to the cytoplasm. The catalysed reaction is S-adenosyl-L-homocysteine + H2O = L-homocysteine + adenosine. It functions in the pathway amino-acid biosynthesis; L-homocysteine biosynthesis; L-homocysteine from S-adenosyl-L-homocysteine: step 1/1. In terms of biological role, may play a key role in the regulation of the intracellular concentration of adenosylhomocysteine. The chain is Adenosylhomocysteinase from Mycobacterium sp. (strain JLS).